The following is a 785-amino-acid chain: Phenylalanine--tRNA ligase beta subunit (785 aa).

The tRNA-binding domain occupies Ala-39–Arg-148. The region spanning Pro-399 to Ala-474 is the B5 domain. Asp-452, Asp-458, Glu-461, and Glu-462 together coordinate Mg(2+). Residues Ser-692 to Arg-784 enclose the FDX-ACB domain.

Belongs to the phenylalanyl-tRNA synthetase beta subunit family. Type 1 subfamily. As to quaternary structure, tetramer of two alpha and two beta subunits. The cofactor is Mg(2+).

It is found in the cytoplasm. It catalyses the reaction tRNA(Phe) + L-phenylalanine + ATP = L-phenylalanyl-tRNA(Phe) + AMP + diphosphate + H(+). The polypeptide is Phenylalanine--tRNA ligase beta subunit (Chromobacterium violaceum (strain ATCC 12472 / DSM 30191 / JCM 1249 / CCUG 213 / NBRC 12614 / NCIMB 9131 / NCTC 9757 / MK)).